Reading from the N-terminus, the 481-residue chain is Glutamate--tRNA ligase 1 (481 aa).

The 'HIGH' region signature appears at 11–21 (PSPTGSLHIGG). The 'KMSKS' region motif lies at 244 to 248 (KLSKR). Lys247 lines the ATP pocket.

The protein belongs to the class-I aminoacyl-tRNA synthetase family. Glutamate--tRNA ligase type 1 subfamily. In terms of assembly, monomer.

The protein resides in the cytoplasm. It carries out the reaction tRNA(Glu) + L-glutamate + ATP = L-glutamyl-tRNA(Glu) + AMP + diphosphate. Its function is as follows. Catalyzes the attachment of glutamate to tRNA(Glu) in a two-step reaction: glutamate is first activated by ATP to form Glu-AMP and then transferred to the acceptor end of tRNA(Glu). The protein is Glutamate--tRNA ligase 1 of Caldanaerobacter subterraneus subsp. tengcongensis (strain DSM 15242 / JCM 11007 / NBRC 100824 / MB4) (Thermoanaerobacter tengcongensis).